A 138-amino-acid polypeptide reads, in one-letter code: Large ribosomal subunit protein bL17 (138 aa).

It belongs to the bacterial ribosomal protein bL17 family. Part of the 50S ribosomal subunit. Contacts protein L32.

The polypeptide is Large ribosomal subunit protein bL17 (Phenylobacterium zucineum (strain HLK1)).